We begin with the raw amino-acid sequence, 232 residues long: Triosephosphate isomerase (232 aa).

6 to 8 (NFK) provides a ligand contact to substrate. H90 acts as the Electrophile in catalysis. Residue E159 is the Proton acceptor of the active site. Positions 165 and 195 each coordinate substrate.

Belongs to the triosephosphate isomerase family. In terms of assembly, homodimer.

It localises to the cytoplasm. It catalyses the reaction D-glyceraldehyde 3-phosphate = dihydroxyacetone phosphate. The protein operates within carbohydrate biosynthesis; gluconeogenesis. It participates in carbohydrate degradation; glycolysis; D-glyceraldehyde 3-phosphate from glycerone phosphate: step 1/1. In terms of biological role, involved in the gluconeogenesis. Catalyzes stereospecifically the conversion of dihydroxyacetone phosphate (DHAP) to D-glyceraldehyde-3-phosphate (G3P). This Wolinella succinogenes (strain ATCC 29543 / DSM 1740 / CCUG 13145 / JCM 31913 / LMG 7466 / NCTC 11488 / FDC 602W) (Vibrio succinogenes) protein is Triosephosphate isomerase.